Here is a 708-residue protein sequence, read N- to C-terminus: Polyribonucleotide nucleotidyltransferase (708 aa).

Residues Asp486 and Asp492 each coordinate Mg(2+). One can recognise a KH domain in the interval 553 to 612; it reads PRITTIKVPPQKVREVIGSGGKVIREITEVTGTKIDIEDDGTIKIASADAEATQRAVDWI. The S1 motif domain occupies 622–690; sequence GVVYTGKVVK…DRGKIKLSMK (69 aa).

It belongs to the polyribonucleotide nucleotidyltransferase family. Requires Mg(2+) as cofactor.

Its subcellular location is the cytoplasm. The enzyme catalyses RNA(n+1) + phosphate = RNA(n) + a ribonucleoside 5'-diphosphate. Its function is as follows. Involved in mRNA degradation. Catalyzes the phosphorolysis of single-stranded polyribonucleotides processively in the 3'- to 5'-direction. The protein is Polyribonucleotide nucleotidyltransferase of Rhodospirillum rubrum (strain ATCC 11170 / ATH 1.1.1 / DSM 467 / LMG 4362 / NCIMB 8255 / S1).